A 315-amino-acid chain; its full sequence is Intradiol ring-cleavage dioxygenase prcA (315 aa).

Fe cation-binding residues include Tyr166, Tyr200, His224, and His226. The interval 287 to 315 (KKHHPNPNSAPPVSSFERFNKASKTQEKL) is disordered. The span at 304–315 (RFNKASKTQEKL) shows a compositional bias: basic and acidic residues.

Belongs to the intradiol ring-cleavage dioxygenase family. Homodimer. Fe(3+) serves as cofactor.

The catalysed reaction is 3,4-dihydroxybenzoate + O2 = 3-carboxy-cis,cis-muconate + 2 H(+). Functionally, intradiol ring-cleavage dioxygenase; part of the benzoic acid degradation pathway also known as the protocatechuic acid pathway. Benzoic acid debradation begins with the conversion of benzoic acid into 4-hydroxybenzoic acid through hydroxylation by the benzoate-4-monooxygenase bphA, and its partner NADPH-cytochrome P450 reductase cprA which act as a mediator in electron donation from NADPH. 4-Hydroxybenzoic acid is then converted into 3,4-dihydroxybenzoic acid (also called protocatechuic acid) by the p-hydroxybenzoate-m-hydroxylase phhA. Protocatechuic acid is converted into 3-carboxy-cis,cis-muconic acid by the intradiol ring-cleavage dioxygenase prcA, which is further metabolized through the 3-oxoadipate pathway to finally enter the tricarboxylic acid cycle (TCA). This Aspergillus niger (strain ATCC MYA-4892 / CBS 513.88 / FGSC A1513) protein is Intradiol ring-cleavage dioxygenase prcA.